The primary structure comprises 57 residues: uncharacterized protein (57 aa).

2 consecutive transmembrane segments (helical) span residues leucine 2–valine 22 and glycine 29–isoleucine 49.

The protein localises to the cell membrane. This is an uncharacterized protein from Bacillus subtilis (strain 168).